A 500-amino-acid chain; its full sequence is Cobyric acid synthase (500 aa).

The GATase cobBQ-type domain occupies 253 to 446 (KIGVAAIYFP…FHGFFDRPEV (194 aa)). Cys334 functions as the Nucleophile in the catalytic mechanism. His438 is a catalytic residue.

The protein belongs to the CobB/CobQ family. CobQ subfamily.

Its pathway is cofactor biosynthesis; adenosylcobalamin biosynthesis. Functionally, catalyzes amidations at positions B, D, E, and G on adenosylcobyrinic A,C-diamide. NH(2) groups are provided by glutamine, and one molecule of ATP is hydrogenolyzed for each amidation. This is Cobyric acid synthase from Chlorobaculum tepidum (strain ATCC 49652 / DSM 12025 / NBRC 103806 / TLS) (Chlorobium tepidum).